A 212-amino-acid chain; its full sequence is ATP-dependent Clp protease proteolytic subunit (212 aa).

Ser114 acts as the Nucleophile in catalysis. Residue His139 is part of the active site.

It belongs to the peptidase S14 family. As to quaternary structure, fourteen ClpP subunits assemble into 2 heptameric rings which stack back to back to give a disk-like structure with a central cavity, resembling the structure of eukaryotic proteasomes.

Its subcellular location is the cytoplasm. It carries out the reaction Hydrolysis of proteins to small peptides in the presence of ATP and magnesium. alpha-casein is the usual test substrate. In the absence of ATP, only oligopeptides shorter than five residues are hydrolyzed (such as succinyl-Leu-Tyr-|-NHMec, and Leu-Tyr-Leu-|-Tyr-Trp, in which cleavage of the -Tyr-|-Leu- and -Tyr-|-Trp bonds also occurs).. Functionally, cleaves peptides in various proteins in a process that requires ATP hydrolysis. Has a chymotrypsin-like activity. Plays a major role in the degradation of misfolded proteins. This chain is ATP-dependent Clp protease proteolytic subunit, found in Aromatoleum aromaticum (strain DSM 19018 / LMG 30748 / EbN1) (Azoarcus sp. (strain EbN1)).